Consider the following 284-residue polypeptide: RNase adapter protein RapZ (284 aa).

8–15 (GRSGSGKS) provides a ligand contact to ATP. Position 56–59 (56–59 (DVRN)) interacts with GTP. The tract at residues 266–284 (RSRGKNVQSRHRTLEKRKS) is RNA-binding.

It belongs to the RapZ-like family. RapZ subfamily. As to quaternary structure, homotrimer.

Its function is as follows. Modulates the synthesis of GlmS, by affecting the processing and stability of the regulatory small RNA GlmZ. When glucosamine-6-phosphate (GlcN6P) concentrations are high in the cell, RapZ binds GlmZ and targets it to cleavage by RNase E. Consequently, GlmZ is inactivated and unable to activate GlmS synthesis. Under low GlcN6P concentrations, RapZ is sequestered and inactivated by an other regulatory small RNA, GlmY, preventing GlmZ degradation and leading to synthesis of GlmS. The sequence is that of RNase adapter protein RapZ from Klebsiella oxytoca.